Reading from the N-terminus, the 211-residue chain is MRLTAKQVTWLKVSLHLAGLLPFLWLVWAINHGGLGADPVKDIQHFTGRTALKFLLATLLITPLARYAKQPLLIRTRRLLGLWCFAWATLHLTSYALLELGVNNLALLGKELITRPYLTLGIISWVILLALAFTSTQAMQRKLGKHWQQLHNFVYLVAILAPIHYLWSVKIISPQPLIYAGLAVLLLALRYKKLRSLFKRLRKQVHNKLSV.

The next 4 helical transmembrane spans lie at 17–37, 82–102, 116–136, and 153–173; these read LAGL…GLGA, LWCF…ELGV, PYLT…FTST, and FVYL…KIIS.

Belongs to the MsrQ family. Heterodimer of a catalytic subunit (MsrP) and a heme-binding subunit (MsrQ). Requires FMN as cofactor. The cofactor is heme b.

It localises to the cell inner membrane. Functionally, part of the MsrPQ system that repairs oxidized periplasmic proteins containing methionine sulfoxide residues (Met-O), using respiratory chain electrons. Thus protects these proteins from oxidative-stress damage caused by reactive species of oxygen and chlorine generated by the host defense mechanisms. MsrPQ is essential for the maintenance of envelope integrity under bleach stress, rescuing a wide series of structurally unrelated periplasmic proteins from methionine oxidation, including the primary periplasmic chaperone SurA and the lipoprotein Pal. MsrQ provides electrons for reduction to the reductase catalytic subunit MsrP, using the quinone pool of the respiratory chain. The sequence is that of Protein-methionine-sulfoxide reductase heme-binding subunit MsrQ from Shigella sonnei (strain Ss046).